The chain runs to 336 residues: Phosphoribosylformylglycinamidine cyclo-ligase (336 aa).

It belongs to the AIR synthase family.

Its subcellular location is the cytoplasm. The enzyme catalyses 2-formamido-N(1)-(5-O-phospho-beta-D-ribosyl)acetamidine + ATP = 5-amino-1-(5-phospho-beta-D-ribosyl)imidazole + ADP + phosphate + H(+). The protein operates within purine metabolism; IMP biosynthesis via de novo pathway; 5-amino-1-(5-phospho-D-ribosyl)imidazole from N(2)-formyl-N(1)-(5-phospho-D-ribosyl)glycinamide: step 2/2. The polypeptide is Phosphoribosylformylglycinamidine cyclo-ligase (Thermoanaerobacter pseudethanolicus (strain ATCC 33223 / 39E) (Clostridium thermohydrosulfuricum)).